Here is a 141-residue protein sequence, read N- to C-terminus: Holo-[acyl-carrier-protein] synthase (141 aa).

Residues D8 and E63 each contribute to the Mg(2+) site.

It belongs to the P-Pant transferase superfamily. AcpS family. Mg(2+) is required as a cofactor.

The protein localises to the cytoplasm. The catalysed reaction is apo-[ACP] + CoA = holo-[ACP] + adenosine 3',5'-bisphosphate + H(+). Functionally, transfers the 4'-phosphopantetheine moiety from coenzyme A to a Ser of acyl-carrier-protein. This Rhodospirillum centenum (strain ATCC 51521 / SW) protein is Holo-[acyl-carrier-protein] synthase.